The primary structure comprises 424 residues: Probable ribonuclease FAU-1 (424 aa).

The protein belongs to the FAU-1 family.

Functionally, probable RNase involved in rRNA stability through maturation and/or degradation of precursor rRNAs. Binds to RNA in loop regions with AU-rich sequences. In Saccharolobus islandicus (strain Y.G.57.14 / Yellowstone #1) (Sulfolobus islandicus), this protein is Probable ribonuclease FAU-1.